A 196-amino-acid polypeptide reads, in one-letter code: Corrinoid adenosyltransferase CobA (196 aa).

Position 36 to 42 (36 to 42 (GNGKGKT)) interacts with ATP.

This sequence belongs to the Cob(I)alamin adenosyltransferase family. In terms of assembly, homodimer.

Its subcellular location is the cytoplasm. The enzyme catalyses 2 cob(II)yrinate a,c diamide + reduced [electron-transfer flavoprotein] + 2 ATP = 2 adenosylcob(III)yrinate a,c-diamide + 2 triphosphate + oxidized [electron-transfer flavoprotein] + 3 H(+). It carries out the reaction 2 cob(II)alamin + reduced [electron-transfer flavoprotein] + 2 ATP = 2 adenosylcob(III)alamin + 2 triphosphate + oxidized [electron-transfer flavoprotein] + 3 H(+). Its pathway is cofactor biosynthesis; adenosylcobalamin biosynthesis; adenosylcobalamin from cob(II)yrinate a,c-diamide: step 2/7. In terms of biological role, required for both de novo synthesis of the corrin ring for the assimilation of exogenous corrinoids. Participates in the adenosylation of a variety of incomplete and complete corrinoids. This is Corrinoid adenosyltransferase CobA (btuR) from Salmonella typhimurium (strain LT2 / SGSC1412 / ATCC 700720).